The primary structure comprises 288 residues: Bifunctional protein FolD (288 aa).

NADP(+) contacts are provided by residues 166–168 and Ile232; that span reads GAS.

Belongs to the tetrahydrofolate dehydrogenase/cyclohydrolase family. Homodimer.

The enzyme catalyses (6R)-5,10-methylene-5,6,7,8-tetrahydrofolate + NADP(+) = (6R)-5,10-methenyltetrahydrofolate + NADPH. It carries out the reaction (6R)-5,10-methenyltetrahydrofolate + H2O = (6R)-10-formyltetrahydrofolate + H(+). Its pathway is one-carbon metabolism; tetrahydrofolate interconversion. In terms of biological role, catalyzes the oxidation of 5,10-methylenetetrahydrofolate to 5,10-methenyltetrahydrofolate and then the hydrolysis of 5,10-methenyltetrahydrofolate to 10-formyltetrahydrofolate. The sequence is that of Bifunctional protein FolD from Salmonella arizonae (strain ATCC BAA-731 / CDC346-86 / RSK2980).